Reading from the N-terminus, the 421-residue chain is Cell division protein FtsZ (421 aa).

Residues 26–30 (GGGGN), 132–134 (GTG), glutamate 163, arginine 167, and asparagine 211 contribute to the GTP site.

The protein belongs to the FtsZ family. As to quaternary structure, homodimer. Polymerizes to form a dynamic ring structure in a strictly GTP-dependent manner. Interacts directly with several other division proteins.

The protein localises to the cytoplasm. Functionally, essential cell division protein that forms a contractile ring structure (Z ring) at the future cell division site. The regulation of the ring assembly controls the timing and the location of cell division. One of the functions of the FtsZ ring is to recruit other cell division proteins to the septum to produce a new cell wall between the dividing cells. Binds GTP and shows GTPase activity. The polypeptide is Cell division protein FtsZ (Haemophilus influenzae (strain ATCC 51907 / DSM 11121 / KW20 / Rd)).